Reading from the N-terminus, the 233-residue chain is Ribosome maturation factor RimM (233 aa).

Positions 1–51 are disordered; that stretch reads MKRKQDSKGAGSRGQGAGEKKQGAGGRGQGEKKQKKSPVPSPQSPVPDPDE. A compositionally biased stretch (gly residues) spans 11–28; it reads GSRGQGAGEKKQGAGGRG. The PRC barrel domain occupies 145-226; the sequence is GEDEYHVVDL…RIEITPPPGL (82 aa).

It belongs to the RimM family. As to quaternary structure, binds ribosomal protein uS19.

It is found in the cytoplasm. An accessory protein needed during the final step in the assembly of 30S ribosomal subunit, possibly for assembly of the head region. Essential for efficient processing of 16S rRNA. May be needed both before and after RbfA during the maturation of 16S rRNA. It has affinity for free ribosomal 30S subunits but not for 70S ribosomes. The protein is Ribosome maturation factor RimM of Trichormus variabilis (strain ATCC 29413 / PCC 7937) (Anabaena variabilis).